The sequence spans 237 residues: MFYKFLLFDLDHTLLDFDAAEDVALTQLLKEEGVADIQAYKDYYVPMNKALWKDLELKKISKQELVNTRFSRLFSHFGQEKDGSFLAQRYQFYLAQQGQTLSGAHDLLDSLIERDYDLYAATNGITAIQTGRLAQSGLVPYFNQVFISEQLQTQKPDALFYEKIGQQIAGFSKEKTLMIGDSLTADIQGGNNAGIDTIWYNPHHLENHTQAQPTYEVYSYQDLLDCLDKNILEKITF.

The active-site Nucleophile is the Asp-9. Mg(2+)-binding residues include Asp-9, Asp-11, and Asp-181. Asp-11 (proton donor) is an active-site residue.

Belongs to the HAD-like hydrolase superfamily. YjjG family. Homodimer. Mg(2+) is required as a cofactor. Requires Mn(2+) as cofactor.

Its subcellular location is the cytoplasm. It carries out the reaction a ribonucleoside 5'-phosphate + H2O = a ribonucleoside + phosphate. Functionally, nucleotidase that shows high phosphatase activity toward non-canonical pyrimidine nucleotides and three canonical nucleoside 5'-monophosphates (UMP, dUMP and dTMP), and no activity against IMP, UDP, GMP, AMP, UTP or pNPP. Appears to function as a house-cleaning nucleotidase in vivo, since the general nucleotidase activity of it allows it to protect cells against non-canonical pyrimidine derivatives such as 5-fluoro-2'-deoxyuridine monophosphate (5-FdUMP), and prevents the incorporation of potentially mutagenic nucleotides such as 5-bromo-2'-deoxyuridine (5-BrdU) into DNA. Is strictly specific to pyrimidine substrates with 5'-monophosphates and shows no activity against nucleoside di- and triphosphates. The chain is Pyrimidine 5'-nucleotidase PynA from Streptococcus pneumoniae (strain ATCC BAA-255 / R6).